Here is a 555-residue protein sequence, read N- to C-terminus: Phosphoglucomutase (555 aa).

Alpha-D-glucose 1,6-bisphosphate contacts are provided by Arg22 and Ser114. The active-site Phosphoserine intermediate is the Ser114. Ser114, Asp279, Asp281, and Asp283 together coordinate Mg(2+). Ser114 carries the phosphoserine modification. Positions 283, 284, 347, 366, 368, and 379 each coordinate alpha-D-glucose 1,6-bisphosphate.

This sequence belongs to the phosphohexose mutase family. In terms of assembly, monomer. The cofactor is Mg(2+).

It is found in the cytoplasm. The enzyme catalyses alpha-D-glucose 1-phosphate = alpha-D-glucose 6-phosphate. The catalysed reaction is O-phospho-L-seryl-[protein] + alpha-D-glucose 1-phosphate = alpha-D-glucose 1,6-bisphosphate + L-seryl-[protein]. It catalyses the reaction alpha-D-glucose 1,6-bisphosphate + L-seryl-[protein] = O-phospho-L-seryl-[protein] + alpha-D-glucose 6-phosphate. Functionally, catalyzes the reversible isomerization of alpha-D-glucose 1-phosphate to alpha-D-glucose 6-phosphate. The mechanism proceeds via the intermediate compound alpha-D-glucose 1,6-bisphosphate. Key enzyme in hexose metabolism. The reverse reaction is an essential step for biosynthesis because glucose 1-phosphate is the starting point for the synthesis of UDP-glucose, which acts as a precursor for the synthesis of oligosaccharides and trehalose. This Aspergillus oryzae (strain ATCC 42149 / RIB 40) (Yellow koji mold) protein is Phosphoglucomutase (pgmA).